The following is a 130-amino-acid chain: Small ribosomal subunit protein uS11 (130 aa).

This sequence belongs to the universal ribosomal protein uS11 family. As to quaternary structure, part of the 30S ribosomal subunit. Interacts with proteins S7 and S18. Binds to IF-3.

In terms of biological role, located on the platform of the 30S subunit, it bridges several disparate RNA helices of the 16S rRNA. Forms part of the Shine-Dalgarno cleft in the 70S ribosome. The protein is Small ribosomal subunit protein uS11 of Prochlorococcus marinus (strain MIT 9312).